Reading from the N-terminus, the 219-residue chain is Probable transcriptional regulator flp (219 aa).

The region spanning 144–212 (DSINVRLTHY…GKQVRILNAE (69 aa)) is the HTH crp-type domain. A DNA-binding region (H-T-H motif) is located at residues 191-210 (KRLAEEKLIERSGKQVRILN).

The polypeptide is Probable transcriptional regulator flp (flp) (Lacticaseibacillus casei (Lactobacillus casei)).